Reading from the N-terminus, the 334-residue chain is Putative transport protein MJ1177 (334 aa).

7 consecutive transmembrane segments (helical) span residues V13–A33, L61–F81, I138–F158, S191–Y211, L234–I254, K259–I279, and V293–I313.

Belongs to the autoinducer-2 exporter (AI-2E) (TC 2.A.86) family.

It is found in the cell membrane. This chain is Putative transport protein MJ1177, found in Methanocaldococcus jannaschii (strain ATCC 43067 / DSM 2661 / JAL-1 / JCM 10045 / NBRC 100440) (Methanococcus jannaschii).